The chain runs to 282 residues: Putative 23S rRNA (guanine-N(1)-)-methyltransferase YxjB (282 aa).

Residues Cys12, Cys15, Cys29, and His34 each coordinate Zn(2+). An S-adenosyl-L-methionine-binding site is contributed by 103–104 (EG).

This sequence belongs to the methyltransferase superfamily. RlmA family.

This chain is Putative 23S rRNA (guanine-N(1)-)-methyltransferase YxjB (yxjB), found in Bacillus subtilis (strain 168).